A 510-amino-acid polypeptide reads, in one-letter code: Zinc metalloproteinase (510 aa).

An N-terminal signal peptide occupies residues 1-24 (MKSKLICIIMVIAFQAHFTMTVKA). Residues 25–200 (DSVGEEKLQN…ILKKQNMLSE (176 aa)) constitute a propeptide that is removed on maturation. Histidine 349 lines the Zn(2+) pocket. Residue glutamate 350 is part of the active site. Histidine 353 and glutamate 373 together coordinate Zn(2+). Histidine 437 (proton donor) is an active-site residue.

It belongs to the peptidase M4 family. Zn(2+) is required as a cofactor.

It is found in the secreted. Functionally, probably linked to the pathogenesis of listerial infection. The polypeptide is Zinc metalloproteinase (mpl) (Listeria monocytogenes serovar 1/2a (strain ATCC BAA-679 / EGD-e)).